The chain runs to 189 residues: Elongation factor P (189 aa).

At Lys34 the chain carries N6-(3,6-diaminohexanoyl)-5-hydroxylysine.

The protein belongs to the elongation factor P family. May be beta-lysylated on the epsilon-amino group of Lys-34 by the combined action of EpmA and EpmB, and then hydroxylated on the C5 position of the same residue by EpmC (if this protein is present). Lysylation is critical for the stimulatory effect of EF-P on peptide-bond formation. The lysylation moiety may extend toward the peptidyltransferase center and stabilize the terminal 3-CCA end of the tRNA. Hydroxylation of the C5 position on Lys-34 may allow additional potential stabilizing hydrogen-bond interactions with the P-tRNA.

The protein resides in the cytoplasm. Its pathway is protein biosynthesis; polypeptide chain elongation. Its function is as follows. Involved in peptide bond synthesis. Alleviates ribosome stalling that occurs when 3 or more consecutive Pro residues or the sequence PPG is present in a protein, possibly by augmenting the peptidyl transferase activity of the ribosome. Modification of Lys-34 is required for alleviation. The sequence is that of Elongation factor P from Acinetobacter baumannii (strain AB307-0294).